Here is a 119-residue protein sequence, read N- to C-terminus: Large ribosomal subunit protein uL18 (119 aa).

It belongs to the universal ribosomal protein uL18 family. In terms of assembly, part of the 50S ribosomal subunit; part of the 5S rRNA/L5/L18/L25 subcomplex. Contacts the 5S and 23S rRNAs.

Its function is as follows. This is one of the proteins that bind and probably mediate the attachment of the 5S RNA into the large ribosomal subunit, where it forms part of the central protuberance. The protein is Large ribosomal subunit protein uL18 of Lactobacillus delbrueckii subsp. bulgaricus (strain ATCC 11842 / DSM 20081 / BCRC 10696 / JCM 1002 / NBRC 13953 / NCIMB 11778 / NCTC 12712 / WDCM 00102 / Lb 14).